The following is a 932-amino-acid chain: 2-oxoglutarate dehydrogenase E1 component (932 aa).

The protein belongs to the alpha-ketoglutarate dehydrogenase family. As to quaternary structure, homodimer. Part of the 2-oxoglutarate dehydrogenase (OGDH) complex composed of E1 (2-oxoglutarate dehydrogenase), E2 (dihydrolipoamide succinyltransferase) and E3 (dihydrolipoamide dehydrogenase); the complex contains multiple copies of the three enzymatic components (E1, E2 and E3). It depends on thiamine diphosphate as a cofactor.

The catalysed reaction is N(6)-[(R)-lipoyl]-L-lysyl-[protein] + 2-oxoglutarate + H(+) = N(6)-[(R)-S(8)-succinyldihydrolipoyl]-L-lysyl-[protein] + CO2. Functionally, E1 component of the 2-oxoglutarate dehydrogenase (OGDH) complex which catalyzes the decarboxylation of 2-oxoglutarate, the first step in the conversion of 2-oxoglutarate to succinyl-CoA and CO(2). This is 2-oxoglutarate dehydrogenase E1 component from Staphylococcus aureus (strain MW2).